The primary structure comprises 105 residues: Prokineticin-1 (105 aa).

Residues 1 to 19 (MRGAVQVFIMLLLATVSDC) form the signal peptide. Disulfide bonds link Cys-26–Cys-38, Cys-32–Cys-50, Cys-37–Cys-78, Cys-60–Cys-86, and Cys-80–Cys-96.

Belongs to the AVIT (prokineticin) family.

It localises to the secreted. Potently contracts gastrointestinal (GI) smooth muscle. Induces proliferation, migration and fenestration (the formation of membrane discontinuities) in capillary endothelial cells derived from endocrine glands. Has little or no effect on a variety of other endothelial and non-endothelial cell types. Induces proliferation and differentiation, but not migration, of enteric neural crest cells. Directly influences neuroblastoma progression by promoting the proliferation and migration of neuroblastoma cells. Positively regulates PTGS2 expression and prostaglandin synthesis. May play a role in placentation. May play a role in normal and pathological testis angiogenesis. This Rattus norvegicus (Rat) protein is Prokineticin-1 (Prok1).